Consider the following 272-residue polypeptide: Rhomboid-type serine protease B (272 aa).

6 helical membrane passes run 30-50 (LVLL…WSVV), 72-92 (PFIH…TPLL), 103-123 (TAVA…YILV), 133-153 (AVVG…IKTF), 164-184 (TKIP…IFVP), and 186-206 (TSFL…LGYL). S138 functions as the Nucleophile in the catalytic mechanism. The active site involves H191.

The protein belongs to the peptidase S54 family.

It localises to the membrane. The enzyme catalyses Cleaves type-1 transmembrane domains using a catalytic dyad composed of serine and histidine that are contributed by different transmembrane domains.. Its function is as follows. Rhomboid protease that catalyzes intramembrane proteolysis. Required for transcription factor srbA activation by mediating its release from the membrane and thereby regulating its activity under hypoxic conditions. Essential for iron homeostasis and resistance to azoles such as voriconazole. Required for virulence in murine models of invasive pulmonary aspergillosis (IPA). This Aspergillus fumigatus (strain ATCC MYA-4609 / CBS 101355 / FGSC A1100 / Af293) (Neosartorya fumigata) protein is Rhomboid-type serine protease B.